The sequence spans 354 residues: Protein-glutamate methylesterase/protein-glutamine glutaminase 2 (354 aa).

In terms of domain architecture, Response regulatory spans 3–120; the sequence is RVVVVDDSMS…PADLADYARD (118 aa). The residue at position 54 (aspartate 54) is a 4-aspartylphosphate. The CheB-type methylesterase domain maps to 164–354; it reads ATRLSRVIAI…MGARLSEALQ (191 aa). Residues serine 176, histidine 202, and aspartate 298 contribute to the active site.

This sequence belongs to the CheB family. Phosphorylated by CheA. Phosphorylation of the N-terminal regulatory domain activates the methylesterase activity.

The protein localises to the cytoplasm. The enzyme catalyses [protein]-L-glutamate 5-O-methyl ester + H2O = L-glutamyl-[protein] + methanol + H(+). It carries out the reaction L-glutaminyl-[protein] + H2O = L-glutamyl-[protein] + NH4(+). In terms of biological role, involved in chemotaxis. Part of a chemotaxis signal transduction system that modulates chemotaxis in response to various stimuli. Catalyzes the demethylation of specific methylglutamate residues introduced into the chemoreceptors (methyl-accepting chemotaxis proteins or MCP) by CheR. Also mediates the irreversible deamidation of specific glutamine residues to glutamic acid. This Burkholderia thailandensis (strain ATCC 700388 / DSM 13276 / CCUG 48851 / CIP 106301 / E264) protein is Protein-glutamate methylesterase/protein-glutamine glutaminase 2.